Consider the following 425-residue polypeptide: Imidazolonepropionase (425 aa).

Fe(3+) contacts are provided by histidine 82 and histidine 84. 2 residues coordinate Zn(2+): histidine 82 and histidine 84. Residues arginine 91, tyrosine 154, and histidine 187 each contribute to the 4-imidazolone-5-propanoate site. Position 154 (tyrosine 154) interacts with N-formimidoyl-L-glutamate. Histidine 253 is a binding site for Fe(3+). Histidine 253 is a binding site for Zn(2+). Glutamate 256 contributes to the 4-imidazolone-5-propanoate binding site. Aspartate 328 serves as a coordination point for Fe(3+). Aspartate 328 provides a ligand contact to Zn(2+). Asparagine 330 and glycine 332 together coordinate N-formimidoyl-L-glutamate. Serine 333 contributes to the 4-imidazolone-5-propanoate binding site.

It belongs to the metallo-dependent hydrolases superfamily. HutI family. Zn(2+) is required as a cofactor. The cofactor is Fe(3+).

Its subcellular location is the cytoplasm. It carries out the reaction 4-imidazolone-5-propanoate + H2O = N-formimidoyl-L-glutamate. It participates in amino-acid degradation; L-histidine degradation into L-glutamate; N-formimidoyl-L-glutamate from L-histidine: step 3/3. In terms of biological role, catalyzes the hydrolytic cleavage of the carbon-nitrogen bond in imidazolone-5-propanoate to yield N-formimidoyl-L-glutamate. It is the third step in the universal histidine degradation pathway. This Symbiobacterium thermophilum (strain DSM 24528 / JCM 14929 / IAM 14863 / T) protein is Imidazolonepropionase.